The chain runs to 599 residues: Genetic interactor of prohibitins 3, mitochondrial (599 aa).

Residues 1 to 46 constitute a mitochondrion transit peptide; sequence MLSLRRSIWIAACKRVSSFRTTIPIKSLHTNSQPVLSLRNVKFRPY. Positions 158 to 368 constitute a CP-type G domain; it reads IESLDAIMTS…MHDVPGFGEN (211 aa). Positions 312–342 are disordered; the sequence is NSGASTPSDIRALRRKNEQEKNRTGPGASYM. Residues 322-334 are compositionally biased toward basic and acidic residues; that stretch reads RALRRKNEQEKNR.

This sequence belongs to the TRAFAC class YlqF/YawG GTPase family. GEP3 subfamily.

It localises to the mitochondrion. In terms of biological role, may be involved in the mitochondrial lipid metabolism. This is Genetic interactor of prohibitins 3, mitochondrial (GEP3) from Meyerozyma guilliermondii (strain ATCC 6260 / CBS 566 / DSM 6381 / JCM 1539 / NBRC 10279 / NRRL Y-324) (Yeast).